Reading from the N-terminus, the 209-residue chain is PF03932 family protein CutC (209 aa).

The protein localises to the cytoplasm. The chain is PF03932 family protein CutC from Streptococcus pyogenes serotype M6 (strain ATCC BAA-946 / MGAS10394).